Consider the following 269-residue polypeptide: MADHMMAMNHGRFPDGTNGLHHHPAHRMGMGQFPSPHHHQQQQPQHAFNALMGEHIHYGAGNMNATSGIRHAMGPGTVNGGHPPSALAPAARFNNSQFMGPPVASQGGSLPASMQLQKLNNQYFNHHPYPHNHYMPDLHPTAGHQMNGTNQHFRDCNPKHSGGSSTPGGAGGSGTPGGSGGTSGGAGGSSAGGSGGGSTMPASVAHVPAAMLPPNVIDTDFIDEEVLMSLVIEMGLDRIKELPELWLGQNEFDFMTDFVCKQQPSRVSC.

The segment at 142–200 is disordered; sequence AGHQMNGTNQHFRDCNPKHSGGSSTPGGAGGSGTPGGSGGTSGGAGGSSAGGSGGGSTM. Gly residues predominate over residues 165–198; that stretch reads STPGGAGGSGTPGGSGGTSGGAGGSSAGGSGGGS.

It belongs to the CITED family. As to quaternary structure, interacts (via C-terminus) with EP300 (via CH1 domain); the interaction is stimulated in response to hypoxia. Interacts with PPARA. Interacts (via C-terminus) with TFAP2A, TFAP2B and TFAP2C. Interacts (via C-terminus) with SMAD2. Interacts (via C-terminus) with SMAD3 (via MH2 domain). Interacts with LHX2 (via LIM domains). Interacts with WT1 isoform 1 and isoform 3. Ubiquitous.

The protein resides in the nucleus. Functionally, transcriptional coactivator of the p300/CBP-mediated transcription complex. Acts as a bridge, linking TFAP2 transcription factors and the p300/CBP transcriptional coactivator complex in order to stimulate TFAP2-mediated transcriptional activation. Positively regulates TGF-beta signaling through its association with the SMAD/p300/CBP-mediated transcriptional coactivator complex. Stimulates the peroxisome proliferator-activated receptors PPARA transcriptional activity. Enhances estrogen-dependent transactivation mediated by estrogen receptors. Also acts as a transcriptional corepressor; interferes with the binding of the transcription factors HIF1A or STAT2 and the p300/CBP transcriptional coactivator complex. Participates in sex determination and early gonad development by stimulating transcription activation of SRY. Plays a role in controlling left-right patterning during embryogenesis; potentiates transcriptional activation of NODAL-mediated gene transcription in the left lateral plate mesoderm (LPM). Plays an essential role in differentiation of the adrenal cortex from the adrenogonadal primordium (AGP); stimulates WT1-mediated transcription activation thereby up-regulating the nuclear hormone receptor NR5A1 promoter activity. Associates with chromatin to the PITX2 P1 promoter region. In Mus musculus (Mouse), this protein is Cbp/p300-interacting transactivator 2 (Cited2).